The primary structure comprises 488 residues: Probable cytosol aminopeptidase (488 aa).

Mn(2+) contacts are provided by lysine 251 and aspartate 256. Residue lysine 263 is part of the active site. Mn(2+)-binding residues include aspartate 274, aspartate 333, and glutamate 335. Residue arginine 337 is part of the active site.

This sequence belongs to the peptidase M17 family. It depends on Mn(2+) as a cofactor.

It localises to the cytoplasm. The catalysed reaction is Release of an N-terminal amino acid, Xaa-|-Yaa-, in which Xaa is preferably Leu, but may be other amino acids including Pro although not Arg or Lys, and Yaa may be Pro. Amino acid amides and methyl esters are also readily hydrolyzed, but rates on arylamides are exceedingly low.. It carries out the reaction Release of an N-terminal amino acid, preferentially leucine, but not glutamic or aspartic acids.. Presumably involved in the processing and regular turnover of intracellular proteins. Catalyzes the removal of unsubstituted N-terminal amino acids from various peptides. This is Probable cytosol aminopeptidase from Cenarchaeum symbiosum (strain A).